We begin with the raw amino-acid sequence, 335 residues long: tRNA N6-adenosine threonylcarbamoyltransferase (335 aa).

A divalent metal cation-binding residues include His-109, His-113, and Tyr-130. Substrate is bound by residues 130–134, Asp-162, Gly-177, Glu-181, and Asn-266; that span reads YVSGG. An a divalent metal cation-binding site is contributed by Asp-294.

Belongs to the KAE1 / TsaD family. As to quaternary structure, component of the EKC/KEOPS complex composed of at least GON7, TP53RK, TPRKB, OSGEP and LAGE3; the whole complex dimerizes. The cofactor is a divalent metal cation. In terms of tissue distribution, widely expressed at low level. Expressed at intermediate level in lung. Weakly expressed in testis, skeletal muscle, kidney, liver, spleen, brain and heart.

It is found in the cytoplasm. Its subcellular location is the nucleus. The catalysed reaction is L-threonylcarbamoyladenylate + adenosine(37) in tRNA = N(6)-L-threonylcarbamoyladenosine(37) in tRNA + AMP + H(+). In terms of biological role, component of the EKC/KEOPS complex that is required for the formation of a threonylcarbamoyl group on adenosine at position 37 (t(6)A37) in tRNAs that read codons beginning with adenine. The complex is probably involved in the transfer of the threonylcarbamoyl moiety of threonylcarbamoyl-AMP (TC-AMP) to the N6 group of A37. OSGEP likely plays a direct catalytic role in this reaction, but requires other protein(s) of the complex to fulfill this activity. This chain is tRNA N6-adenosine threonylcarbamoyltransferase (Osgep), found in Mus musculus (Mouse).